A 1459-amino-acid polypeptide reads, in one-letter code: PPE family protein PPE34 (1459 aa).

This sequence belongs to the mycobacterial PPE family. Interacts with human TLR2.

Its subcellular location is the cell membrane. The protein resides in the secreted. It localises to the cell wall. It is found in the cell surface. In terms of biological role, facilitates a shift in the ensuing immunity toward the Th2 phenotype and could aid in immune evasion by mycobacteria. Interacts with human Toll-like receptor 2 (TLR2) and triggers functional maturation of human dendritic cells (DCs), leading to secretion of IL-4, IL-5 and IL-10 from CD4(+) T cells and induction of Th2 immune response. Maturation of DCs involves PI3K, ERK1/2, p38 MAPK and NF-kappa-B signaling pathways. In Mycobacterium tuberculosis (strain ATCC 25618 / H37Rv), this protein is PPE family protein PPE34.